A 117-amino-acid chain; its full sequence is MVLCDDERSAFLLVLDERLVDFDSQGGNHISVYLVTHFELSDQSYKDVLSFNDDLLGMEHNCSYAMDILSVKEELDFDFPFNMLAIKSYVQELIKMLGIDITLPEMKERDFDKLSQN.

This is an uncharacterized protein from Bacillus subtilis (strain 168).